Consider the following 1009-residue polypeptide: C2 domain-containing protein aex-1 (1009 aa).

A C2 domain is found at 812 to 945 (NAPHVDVHIS…ASEEKPTQRL (134 aa)).

It belongs to the unc-13 family. Expressed in intestine, body wall muscles and some amphid neurons.

In terms of biological role, involved in retrograde signaling from post-synaptic cells to pre-synaptic neurons, probably by regulating vesicle exocytosis in post-synaptic cells. Acts in muscles, to regulate the localization of synaptic vesicle fusion protein unc-13 likely during vesicle exocytosis and thus regulate retrograde signaling at the neuromuscular junction (NMJ). Regulates anterior body muscle contractions (aBOC) and the expulsion steps during the defecation motor program (DMP). Probably by regulating DMP, plays a homeostatic role in the uptake of triglycerides. Regulates locomotion. The chain is C2 domain-containing protein aex-1 from Caenorhabditis elegans.